Reading from the N-terminus, the 100-residue chain is Apolipoprotein C-II (100 aa).

A signal peptide spans 1 to 22 (MGSRFLLALFLVLLVLGCEVQA). The tract at residues 66 to 74 (SVDEKLRDM) is lipid binding. The lipoprotein lipase cofactor stretch occupies residues 78–100 (SSAAMTTYASIFTDQILTLLKGE).

This sequence belongs to the apolipoprotein C2 family. In terms of processing, proapolipoprotein C-II is synthesized as a sialic acid containing glycoprotein which is subsequently desialylated prior to its proteolytic processing. Proapolipoprotein C-II, the major form found in plasma undergoes proteolytic cleavage of its N-terminal hexapeptide to generate the mature form apolipoprotein C-II, which occurs as the minor form in plasma.

The protein resides in the secreted. In terms of biological role, component of chylomicrons, very low-density lipoproteins (VLDL), low-density lipoproteins (LDL), and high-density lipoproteins (HDL) in plasma. Plays an important role in lipoprotein metabolism as an activator of lipoprotein lipase. The protein is Apolipoprotein C-II (APOC2) of Ellobius talpinus (Northern mole vole).